The following is a 222-amino-acid chain: Nudix hydrolase 11 (222 aa).

Residues 31–175 (AKSSAVLVCL…EGERYLLQYF (145 aa)) enclose the Nudix hydrolase domain. The short motif at 73–96 (GGKRDQEDKDDIATALREAREEIG) is the Nudix box element. The Mg(2+) site is built by glutamate 90 and glutamate 94. The chain crosses the membrane as a helical span at residues 186 to 204 (FIIWALTAGILIRVASIVY).

The protein belongs to the Nudix hydrolase family. PCD1 subfamily. Mn(2+) serves as cofactor. Requires Mg(2+) as cofactor. As to expression, expressed in roots, stems and leaves.

The protein resides in the peroxisome membrane. Functionally, coenzyme A diphosphatase which mediates the cleavage of CoA into 3',5'-ADP from CoA and 4'-phosphopantetheine. Can use malonyl-CoA, hexanoyl-CoA, lauroyl-CoA, myristoyl-CoA and palmitoyl-CoA as substrates, but not isobutyryl-CoA or propionyl-CoA. This Arabidopsis thaliana (Mouse-ear cress) protein is Nudix hydrolase 11 (NUDT11).